Here is a 986-residue protein sequence, read N- to C-terminus: Bifunctional glutamine synthetase adenylyltransferase/adenylyl-removing enzyme (986 aa).

The segment at 1–470 is adenylyl removase; it reads MAAVAKRTVT…ERHYAALFET (470 aa). Residues 476 to 986 form an adenylyl transferase region; the sequence is AGIGNLVFTG…FDLLLRAGRP (511 aa).

The protein belongs to the GlnE family. Requires Mg(2+) as cofactor.

The catalysed reaction is [glutamine synthetase]-O(4)-(5'-adenylyl)-L-tyrosine + phosphate = [glutamine synthetase]-L-tyrosine + ADP. It catalyses the reaction [glutamine synthetase]-L-tyrosine + ATP = [glutamine synthetase]-O(4)-(5'-adenylyl)-L-tyrosine + diphosphate. Its function is as follows. Involved in the regulation of glutamine synthetase GlnA, a key enzyme in the process to assimilate ammonia. When cellular nitrogen levels are high, the C-terminal adenylyl transferase (AT) inactivates GlnA by covalent transfer of an adenylyl group from ATP to specific tyrosine residue of GlnA, thus reducing its activity. Conversely, when nitrogen levels are low, the N-terminal adenylyl removase (AR) activates GlnA by removing the adenylyl group by phosphorolysis, increasing its activity. The regulatory region of GlnE binds the signal transduction protein PII (GlnB) which indicates the nitrogen status of the cell. In Mesorhizobium japonicum (strain LMG 29417 / CECT 9101 / MAFF 303099) (Mesorhizobium loti (strain MAFF 303099)), this protein is Bifunctional glutamine synthetase adenylyltransferase/adenylyl-removing enzyme.